The chain runs to 575 residues: DNA polymerase (575 aa).

Residues 1–191 (MKHMPRKMYS…KQGLDRMTAG (191 aa)) form a 3'-5' exonuclease and strand displacement activities region. Mg(2+) contacts are provided by D145 and D169. The segment at 192 to 229 (SDSLKGFKDIITTKKFKKVFPTLSLGLDKEVRYAYRGG) is involved in DNA-binding, coordination between DNA synthesis and degradation and TP interaction. The interval 230-562 (FTWLNDRFKE…KMKPKPVQVP (333 aa)) is initiation, polymerization and pyrophosphorolytic activities. Residues D249 and V250 each coordinate Mg(2+). 5-methyl-UTP-binding residues include Y254, K371, and K383. Residues 398–420 (DVTGKVPYLKENGALGFRLGEEE) are TPR2. A YCDTD motif is present at residues 454 to 458 (YCDTD). D456 and D458 together coordinate Mg(2+). Residue D458 coordinates 5-methyl-UTP. The tract at residues 563–575 (GGVVLVDDTFTIK) is involved in DNA-binding and TP interaction.

It belongs to the DNA polymerase type-B family. Interacts with the primer terminal protein; this interaction allows the initiation of TP-primed DNA replication at both viral DNA ends. Interacts with DNA. Mg(2+) is required as a cofactor.

It carries out the reaction DNA(n) + a 2'-deoxyribonucleoside 5'-triphosphate = DNA(n+1) + diphosphate. Functionally, polymerase responsible for protein-primed viral DNA replication by strand displacement with high processivity and fidelity. To start replication, the DNA polymerase forms a heterodimer with a free primer terminal protein (TP), recognizes the replication origins at both 5' ends of the linear chromosome, and initiates replication using as primer the OH-group of Ser-232 of the TP. This polymerase possesses three enzymatic activities: DNA synthesis (polymerase), primer terminal protein (TP) deoxynucleotidylation, which is the formation of a covalent linkage (phosphoester) between the hydroxyl group of a specific serine residue in TP and 5'-dAMP, a reaction directed by the second T at the 3' end, and 3' to 5' exonuclease activity. Exonuclease activity has a proofreading purpose. DNA polymerase edits the polymerization errors using an intramolecular pathway as the primer terminus travels from one active site to the other without dissociation from the DNA. DNA polymerization catalyzed by the DNA polymerase is a highly accurate process, but the protein-primed initiation is a quite inaccurate reaction. Since the polymerase initiates the replication on the second thymine, the TP-dAMP initiation product translocates backwards to recover the template information of the first nucleotide (sliding back-mechanism). The protein is DNA polymerase (2) of Bacillus subtilis (Bacteriophage phi-29).